Here is a 131-residue protein sequence, read N- to C-terminus: Putative superoxide reductase (131 aa).

The Fe cation site is built by Glu-15, His-17, His-45, His-51, Cys-115, and His-118.

It belongs to the desulfoferrodoxin family. Requires Fe cation as cofactor.

It carries out the reaction reduced [rubredoxin] + superoxide + 2 H(+) = oxidized [rubredoxin] + H2O2. Functionally, uses electrons from reduced NADP, by way of rubredoxin and an oxidoreductase, to catalyze the reduction of superoxide to hydrogen peroxide. This chain is Putative superoxide reductase, found in Thermotoga maritima (strain ATCC 43589 / DSM 3109 / JCM 10099 / NBRC 100826 / MSB8).